The sequence spans 102 residues: RxLR effector protein PexRD41 (102 aa).

The N-terminal stretch at 1 to 21 is a signal peptide; that stretch reads MRSIFYFALAFAALTCSNASA. The RxLR-dEER motif lies at 39–53; the sequence is RSLRVAGQEAARGEE.

It belongs to the RxLR effector family. Interacts with host KRBP1.

Its subcellular location is the secreted. The protein resides in the host cytoplasm. It localises to the host nucleus. It is found in the host nucleolus. Effector that enhances P.infestans colonization of host plant leaves. During the early stages of P.infestans infection, interacts with and stabilizes host potato K-homology (KH) RNA-binding protein KRBP1, leading to its accumulation. This Phytophthora infestans (strain T30-4) (Potato late blight agent) protein is RxLR effector protein PexRD41.